The following is a 210-amino-acid chain: ATP-dependent Clp protease proteolytic subunit (210 aa).

The active-site Nucleophile is Ser113. His138 is an active-site residue.

Belongs to the peptidase S14 family. As to quaternary structure, fourteen ClpP subunits assemble into 2 heptameric rings which stack back to back to give a disk-like structure with a central cavity, resembling the structure of eukaryotic proteasomes.

It localises to the cytoplasm. The enzyme catalyses Hydrolysis of proteins to small peptides in the presence of ATP and magnesium. alpha-casein is the usual test substrate. In the absence of ATP, only oligopeptides shorter than five residues are hydrolyzed (such as succinyl-Leu-Tyr-|-NHMec, and Leu-Tyr-Leu-|-Tyr-Trp, in which cleavage of the -Tyr-|-Leu- and -Tyr-|-Trp bonds also occurs).. Cleaves peptides in various proteins in a process that requires ATP hydrolysis. Has a chymotrypsin-like activity. Plays a major role in the degradation of misfolded proteins. In Marinomonas sp. (strain MWYL1), this protein is ATP-dependent Clp protease proteolytic subunit.